Consider the following 102-residue polypeptide: Protein V2 (102 aa).

In terms of biological role, may be involved in the regulation of ssDNA versus dsDNA levels. This Beet curly top virus (strain California/Logan) (BCTV) protein is Protein V2.